The sequence spans 354 residues: Long form salivary protein D7L3 (354 aa).

The first 26 residues, 1 to 26, serve as a signal peptide directing secretion; sequence MQLTPRSVHLVHLLLAATTLISPSWS.

This sequence belongs to the PBP/GOBP family.

It is found in the secreted. Modulates blood feeding of female mosquitoes on vertebrate species by binding and sequestering different mediators involved in the host response. Binds serotonin with high affinity. Binds weakly noradrenaline and histamine. Does not bind tryptamine, octopamine, dopamine, adrenaline, leukotriene C4, leukotriene D4, leukotriene B4, ADP and U-46619, a stable analog of thromboxane A2. Inhibits agonist-induced platelet aggregation. Exhibits vasodilating activity. This chain is Long form salivary protein D7L3, found in Anopheles gambiae (African malaria mosquito).